A 299-amino-acid polypeptide reads, in one-letter code: Acetylglutamate kinase (299 aa).

Substrate is bound by residues glycine 72–glycine 73, arginine 94, and asparagine 196.

This sequence belongs to the acetylglutamate kinase family. ArgB subfamily.

Its subcellular location is the cytoplasm. The enzyme catalyses N-acetyl-L-glutamate + ATP = N-acetyl-L-glutamyl 5-phosphate + ADP. It participates in amino-acid biosynthesis; L-arginine biosynthesis; N(2)-acetyl-L-ornithine from L-glutamate: step 2/4. Catalyzes the ATP-dependent phosphorylation of N-acetyl-L-glutamate. This chain is Acetylglutamate kinase, found in Burkholderia thailandensis (strain ATCC 700388 / DSM 13276 / CCUG 48851 / CIP 106301 / E264).